A 445-amino-acid chain; its full sequence is KIN17-like protein (445 aa).

The segment at 26-50 (WYCQLCEKQCRDENGFKCHISSESH) adopts a C2H2-type zinc-finger fold. 2 stretches are compositionally biased toward low complexity: residues 215 to 229 (NTTT…TTTN) and 239 to 253 (NDNN…DQTN). The tract at residues 215-256 (NTTTTTTNTTTTTTNKNIFDKLKTNDNNSSNNNYNDQTNPKP) is disordered.

Belongs to the KIN17 family.

The protein is KIN17-like protein of Dictyostelium discoideum (Social amoeba).